Reading from the N-terminus, the 892-residue chain is Protein FAM193B (892 aa).

4 disordered regions span residues 1–78 (MTRR…TSSQ), 164–192 (SCGG…NSGD), 237–321 (EHHQ…PLLK), and 379–403 (DEGL…THPR). Positions 28–37 (APEPQPPPPS) are enriched in pro residues. The span at 56–65 (DGPREEEEPK) shows a compositional bias: basic and acidic residues. Residues 169 to 185 (SHSSSSSSSSSSSSSSS) are compositionally biased toward low complexity. Pro residues-rich tracts occupy residues 248–258 (PNSPTGPPPHP), 274–285 (YPPPLPTTPVAP), and 309–321 (SPHP…PLLK). Residues 379–388 (DEGLGEEEDS) show a composition bias toward acidic residues. The segment covering 391–400 (ERSSCTSSST) has biased composition (low complexity). A coiled-coil region spans residues 485–517 (NSARAAKRARHKLKKKEKEKARLATEALKQVNR). 2 stretches are compositionally biased toward polar residues: residues 587 to 597 (LTPSDLSGSSQ) and 610 to 621 (TLGSPQSHTLQA). Disordered stretches follow at residues 587–655 (LTPS…ENGL) and 671–837 (VKTP…SLDD). Residues 637 to 650 (PPPWTEVRGPPPGI) are compositionally biased toward pro residues. A compositionally biased stretch (low complexity) spans 736–757 (KSQVSSPKQPSKGSEPAKVGSG). A phosphoserine mark is found at Ser-764, Ser-776, and Ser-882.

This sequence belongs to the FAM193 family.

It localises to the cytoplasm. The protein resides in the nucleus. The chain is Protein FAM193B (Fam193b) from Mus musculus (Mouse).